The chain runs to 237 residues: Phosphoribosylaminoimidazole-succinocarboxamide synthase (237 aa).

The protein belongs to the SAICAR synthetase family.

The catalysed reaction is 5-amino-1-(5-phospho-D-ribosyl)imidazole-4-carboxylate + L-aspartate + ATP = (2S)-2-[5-amino-1-(5-phospho-beta-D-ribosyl)imidazole-4-carboxamido]succinate + ADP + phosphate + 2 H(+). It functions in the pathway purine metabolism; IMP biosynthesis via de novo pathway; 5-amino-1-(5-phospho-D-ribosyl)imidazole-4-carboxamide from 5-amino-1-(5-phospho-D-ribosyl)imidazole-4-carboxylate: step 1/2. The protein is Phosphoribosylaminoimidazole-succinocarboxamide synthase of Listeria welshimeri serovar 6b (strain ATCC 35897 / DSM 20650 / CCUG 15529 / CIP 8149 / NCTC 11857 / SLCC 5334 / V8).